The following is a 299-amino-acid chain: tRNA dimethylallyltransferase (299 aa).

13–20 (GPTASGKT) is a binding site for ATP. 15–20 (TASGKT) serves as a coordination point for substrate. The tract at residues 38–41 (DSRQ) is interaction with substrate tRNA.

Belongs to the IPP transferase family. Monomer. Requires Mg(2+) as cofactor.

It catalyses the reaction adenosine(37) in tRNA + dimethylallyl diphosphate = N(6)-dimethylallyladenosine(37) in tRNA + diphosphate. Catalyzes the transfer of a dimethylallyl group onto the adenine at position 37 in tRNAs that read codons beginning with uridine, leading to the formation of N6-(dimethylallyl)adenosine (i(6)A). This chain is tRNA dimethylallyltransferase, found in Parasynechococcus marenigrum (strain WH8102).